The following is a 178-amino-acid chain: Small ribosomal subunit protein bS16 (178 aa).

The interval 78–178 (KLGITQWTAG…AAPAEGEEQA (101 aa)) is disordered. Residues 91–113 (KKGEPGQKAKERAEERAQREADR) show a composition bias toward basic and acidic residues. A compositionally biased stretch (low complexity) spans 114 to 127 (AAAAAEAAAAPAEE). Positions 128-139 (APAEEAPAEEAA) are enriched in acidic residues. Low complexity predominate over residues 140 to 172 (AEAAPEAAAAEEAPAAEAAAEEAAPAAEEAAPA).

This sequence belongs to the bacterial ribosomal protein bS16 family.

This chain is Small ribosomal subunit protein bS16, found in Phenylobacterium zucineum (strain HLK1).